A 261-amino-acid chain; its full sequence is uncharacterized protein (261 aa).

The first 22 residues, 1-22, serve as a signal peptide directing secretion; that stretch reads MRDSKRVVLYISIIVLSIFIIG. A lipid anchor (N-palmitoyl cysteine) is attached at C23. A lipid anchor (S-diacylglycerol cysteine) is attached at C23.

It belongs to the staphylococcal tandem lipoprotein family.

Its subcellular location is the cell membrane. This is an uncharacterized protein from Staphylococcus aureus (strain Mu50 / ATCC 700699).